Here is a 157-residue protein sequence, read N- to C-terminus: Endoribonuclease YbeY (157 aa).

The Zn(2+) site is built by His114, His118, and His124.

This sequence belongs to the endoribonuclease YbeY family. Requires Zn(2+) as cofactor.

Its subcellular location is the cytoplasm. Functionally, single strand-specific metallo-endoribonuclease involved in late-stage 70S ribosome quality control and in maturation of the 3' terminus of the 16S rRNA. The protein is Endoribonuclease YbeY of Klebsiella pneumoniae (strain 342).